The primary structure comprises 470 residues: Isocitrate dehydrogenase (NAD(+)), mitochondrial (470 aa).

A mitochondrion-targeting transit peptide spans 1–26; sequence MTRVERGRVLARAIERAVAHRASARR. NAD(+) is bound by residues 138–140 and N159; that span reads TVT. D-threo-isocitrate-binding positions include 157–163, R193, Y200, K275, and D319; that span reads SPNGAMR. Position 319 (D319) interacts with Mg(2+). K324 contributes to the NAD(+) binding site. D343 lines the D-threo-isocitrate pocket. Mg(2+) contacts are provided by D343 and D347. NAD(+) is bound by residues 380-385 and N399; that span reads HGTVAD.

It belongs to the isocitrate and isopropylmalate dehydrogenases family. As to quaternary structure, forms homodimers. Mg(2+) is required as a cofactor. The cofactor is Mn(2+).

Its subcellular location is the mitochondrion. The catalysed reaction is D-threo-isocitrate + NAD(+) = 2-oxoglutarate + CO2 + NADH. With respect to regulation, the homodimer exhibits allosteric regulation by isocitrate. Performs an essential role in the oxidative function of the tricarboxylic acid cycle and respiration. Catalyzes the decarboxylation of isocitrate to produce 2-oxoglutarate and generate NADH to provide electrons for energy production. This Ostreococcus tauri protein is Isocitrate dehydrogenase (NAD(+)), mitochondrial.